The following is a 310-amino-acid chain: Olfactory receptor 4D1 (310 aa).

Topologically, residues 1 to 25 are extracellular; sequence MEPQNTTQVSMFVLLGFSQTQELQK. The N-linked (GlcNAc...) asparagine glycan is linked to N5. Residues 26 to 49 traverse the membrane as a helical segment; it reads FLFLLFLLVYVTTIVGNLLIMVTV. Over 50–57 the chain is Cytoplasmic; sequence TFDCRLHT. The helical transmembrane segment at 58–79 threads the bilayer; that stretch reads PMYFLLRNLALIDLCYSTVTSP. Residues 80–100 are Extracellular-facing; that stretch reads KMLVDFLHETKTISYQGCMAQ. The cysteines at positions 97 and 189 are disulfide-linked. A helical transmembrane segment spans residues 101–120; it reads IFFFHLLGGGTVFFLSVMAY. The Cytoplasmic segment spans residues 121–139; the sequence is DRYIAISQPLRYVTIMNTQ. Residues 140–158 traverse the membrane as a helical segment; the sequence is LCVGLVVAAWVGGFVHSIV. Topologically, residues 159-195 are extracellular; that stretch reads QLALILPLPFCGPNILDNFYCDVPQVLRLACTDTSLL. The helical transmembrane segment at 196–219 threads the bilayer; sequence EFLMISNSGLLVIIWFLLLLISYT. Residues 220–235 lie on the Cytoplasmic side of the membrane; sequence VILVMLRSHSGKARRK. Residues 236 to 258 form a helical membrane-spanning segment; that stretch reads AASTCTTHIIVVSMIFIPCIYIY. Over 259 to 269 the chain is Extracellular; that stretch reads TWPFTPFLMDK. The helical transmembrane segment at 270-289 threads the bilayer; the sequence is AVSISYTVMTPMLNPMIYTL. The Cytoplasmic portion of the chain corresponds to 290–310; the sequence is RNQDMKAAMRRLGKCLVICRE.

The protein belongs to the G-protein coupled receptor 1 family.

Its subcellular location is the cell membrane. Its function is as follows. Odorant receptor. This is Olfactory receptor 4D1 (OR4D1) from Homo sapiens (Human).